A 557-amino-acid chain; its full sequence is uncharacterized protein (557 aa).

A disordered region spans residues asparagine 17–threonine 38. A run of 9 helical transmembrane segments spans residues leucine 60–alanine 80, glycine 94–alanine 114, serine 214–methionine 234, phenylalanine 261–phenylalanine 281, glycine 297–alanine 317, leucine 348–alanine 368, valine 407–phenylalanine 427, isoleucine 468–valine 488, and tryptophan 498–glycine 518.

This sequence belongs to the amino acid-polyamine-organocation (APC) superfamily.

It is found in the membrane. This is an uncharacterized protein from Schizosaccharomyces pombe (strain 972 / ATCC 24843) (Fission yeast).